The chain runs to 286 residues: Transcription factor bHLH11 (286 aa).

Positions 1–34 (MDQPMKPKTCSESDFADDSSASSSSSSGQNLRGA) are disordered. Low complexity predominate over residues 18–27 (DSSASSSSSS). A bHLH domain is found at 44–94 (AVCSQKAEREKLRRDKLKEQFLELGNALDPNRPKSDKASVLTDTIQMLKDV). Disordered regions lie at residues 182-202 (EQQA…MKQD) and 244-286 (QQDV…MLKP). Low complexity-rich tracts occupy residues 183 to 198 (QQAS…ADAS) and 255 to 269 (SLTT…YSLS). Polar residues predominate over residues 270–279 (QAVQDSSPGT).

In terms of assembly, homodimer. Expressed consitutively in roots, leaves, stems, and flowers.

The protein localises to the nucleus. The protein is Transcription factor bHLH11 (BHLH11) of Arabidopsis thaliana (Mouse-ear cress).